We begin with the raw amino-acid sequence, 279 residues long: Rhamnulose-1-phosphate aldolase (279 aa).

E115 is a catalytic residue. Zn(2+) contacts are provided by H138, H140, and H209.

The protein belongs to the aldolase class II family. RhaD subfamily. Zn(2+) serves as cofactor.

Its subcellular location is the cytoplasm. It carries out the reaction L-rhamnulose 1-phosphate = (S)-lactaldehyde + dihydroxyacetone phosphate. The protein operates within carbohydrate degradation; L-rhamnose degradation; glycerone phosphate from L-rhamnose: step 3/3. Functionally, catalyzes the reversible cleavage of L-rhamnulose-1-phosphate to dihydroxyacetone phosphate (DHAP) and L-lactaldehyde. The protein is Rhamnulose-1-phosphate aldolase of Enterococcus faecalis (strain ATCC 700802 / V583).